A 77-amino-acid chain; its full sequence is U11-lycotoxin-Ls1d (77 aa).

Residues 1–20 form the signal peptide; that stretch reads MKLIIFTGLVLFAIVSLIEA. A propeptide spanning residues 21–26 is cleaved from the precursor; the sequence is EEESGR.

The protein belongs to the neurotoxin 19 (CSTX) family. 10 (U11-Lctx) subfamily. In terms of processing, contains 4 disulfide bonds. Expressed by the venom gland.

It localises to the secreted. This Lycosa singoriensis (Wolf spider) protein is U11-lycotoxin-Ls1d.